Here is a 319-residue protein sequence, read N- to C-terminus: tRNA uridine(34) hydroxylase (319 aa).

The 95-residue stretch at 127 to 221 folds into the Rhodanese domain; it reads KQEDTVIIDA…YGKDPEVQGE (95 aa). The active-site Cysteine persulfide intermediate is Cys181.

Belongs to the TrhO family.

It catalyses the reaction uridine(34) in tRNA + AH2 + O2 = 5-hydroxyuridine(34) in tRNA + A + H2O. In terms of biological role, catalyzes oxygen-dependent 5-hydroxyuridine (ho5U) modification at position 34 in tRNAs. The protein is tRNA uridine(34) hydroxylase of Bacillus cereus (strain ATCC 10987 / NRS 248).